A 189-amino-acid chain; its full sequence is Interferon alpha-1 (189 aa).

An N-terminal signal peptide occupies residues 1–23 (MAPAWSLLLALLLLSCNAICSLG). 2 disulfide bridges follow: cysteine 24–cysteine 122 and cysteine 52–cysteine 162.

It belongs to the alpha/beta interferon family. As to quaternary structure, interacts with CR2.

It is found in the secreted. Produced by macrophages, IFN-alpha have antiviral activities. Interferon stimulates the production of two enzymes: a protein kinase and an oligoadenylate synthetase. The sequence is that of Interferon alpha-1 from Bos taurus (Bovine).